Reading from the N-terminus, the 328-residue chain is P2Y purinoceptor 3 (328 aa).

Topologically, residues 1-22 (MSMANFTGGRNSCTFHEEFKQV) are extracellular. An N-linked (GlcNAc...) asparagine glycan is attached at N5. The chain crosses the membrane as a helical span at residues 23–43 (LLPLVYSVVFLLGLPLNAVVI). The Cytoplasmic portion of the chain corresponds to 44 to 57 (GQIWLARKALTRTT). The helical transmembrane segment at 58–78 (IYMLNLAMADLLYVCSLPLLI) threads the bilayer. Residues 79 to 96 (YNYTQKDYWPFGDFTCKF) are Extracellular-facing. Residues C94 and C172 are joined by a disulfide bond. A helical transmembrane segment spans residues 97 to 117 (VRFQFYTNLHGSILFLTCISV). At 118-139 (QRYMGICHPLASWHKKKGKKLT) the chain is on the cytoplasmic side. The chain crosses the membrane as a helical span at residues 140–160 (WLVCAAVWFIVIAQCLPTFVF). Residues 161–189 (ASTGTQRNRTVCYDLSPPDRSTSYFPYGI) are Extracellular-facing. Residues 190 to 210 (TLTITGFLLPFAAILACYCSM) traverse the membrane as a helical segment. Residues 211–231 (ARILCQKDELIGLAVHKKKDK) are Cytoplasmic-facing. The helical transmembrane segment at 232–252 (AVRMIIIVVIVFSISFFPFHL) threads the bilayer. At 253 to 275 (TKTIYLIVRSSASLPCPTLQAFA) the chain is on the extracellular side. A helical membrane pass occupies residues 276-298 (IAYKCTRPFASMNSVLDPILFYF). Over 299–323 (TQRKFRESTRYLLDKMSSKWRQDHC) the chain is Cytoplasmic.

It belongs to the G-protein coupled receptor 1 family.

The protein resides in the cell membrane. Its function is as follows. Receptor for extracellular ADP &gt; UTP &gt; ATP = UDP. The activity of this receptor is mediated by G proteins which activate a phosphatidylinositol-calcium second messenger system. The chain is P2Y purinoceptor 3 (P2RY3) from Gallus gallus (Chicken).